Consider the following 215-residue polypeptide: Methylthioribulose-1-phosphate dehydratase (215 aa).

Residues histidine 103 and histidine 105 each contribute to the Zn(2+) site.

Belongs to the aldolase class II family. MtnB subfamily. The cofactor is Zn(2+).

It carries out the reaction 5-(methylsulfanyl)-D-ribulose 1-phosphate = 5-methylsulfanyl-2,3-dioxopentyl phosphate + H2O. It functions in the pathway amino-acid biosynthesis; L-methionine biosynthesis via salvage pathway; L-methionine from S-methyl-5-thio-alpha-D-ribose 1-phosphate: step 2/6. In terms of biological role, catalyzes the dehydration of methylthioribulose-1-phosphate (MTRu-1-P) into 2,3-diketo-5-methylthiopentyl-1-phosphate (DK-MTP-1-P). The sequence is that of Methylthioribulose-1-phosphate dehydratase from Sulfurihydrogenibium sp. (strain YO3AOP1).